The primary structure comprises 39 residues: Potassium channel toxin alpha-KTx 2.18 (39 aa).

3 cysteine pairs are disulfide-bonded: cysteine 7–cysteine 29, cysteine 13–cysteine 34, and cysteine 17–cysteine 36. Position 39 is an isoleucine amide (isoleucine 39).

The protein belongs to the short scorpion toxin superfamily. Potassium channel inhibitor family. Alpha-KTx 02 subfamily. In terms of tissue distribution, expressed by the venom gland.

It localises to the secreted. Functionally, weakly blocks Kv1.3/KCNA3 voltage-gated potassium channels. The chain is Potassium channel toxin alpha-KTx 2.18 from Centruroides limpidus (Mexican scorpion).